The following is a 470-amino-acid chain: Homogentisate 1,2-dioxygenase (470 aa).

3 residues coordinate Fe cation: His356, Glu362, and His392.

The protein belongs to the homogentisate dioxygenase family. The cofactor is Fe cation.

The enzyme catalyses homogentisate + O2 = 4-maleylacetoacetate + H(+). The protein operates within amino-acid degradation; L-phenylalanine degradation; acetoacetate and fumarate from L-phenylalanine: step 4/6. The chain is Homogentisate 1,2-dioxygenase (HGO) from Oryza sativa subsp. japonica (Rice).